Reading from the N-terminus, the 344-residue chain is N-acetyl-gamma-glutamyl-phosphate reductase (344 aa).

Residue Cys-149 is part of the active site.

This sequence belongs to the NAGSA dehydrogenase family. Type 1 subfamily.

The protein resides in the cytoplasm. The enzyme catalyses N-acetyl-L-glutamate 5-semialdehyde + phosphate + NADP(+) = N-acetyl-L-glutamyl 5-phosphate + NADPH + H(+). It functions in the pathway amino-acid biosynthesis; L-arginine biosynthesis; N(2)-acetyl-L-ornithine from L-glutamate: step 3/4. Catalyzes the NADPH-dependent reduction of N-acetyl-5-glutamyl phosphate to yield N-acetyl-L-glutamate 5-semialdehyde. In Syntrophobacter fumaroxidans (strain DSM 10017 / MPOB), this protein is N-acetyl-gamma-glutamyl-phosphate reductase.